The sequence spans 320 residues: tRNA dimethylallyltransferase (320 aa).

14-21 (GPTASGKT) contacts ATP. Residue 16-21 (TASGKT) participates in substrate binding. Interaction with substrate tRNA regions lie at residues 39 to 42 (DSAL) and 163 to 167 (QRLQR).

Belongs to the IPP transferase family. In terms of assembly, monomer. The cofactor is Mg(2+).

It carries out the reaction adenosine(37) in tRNA + dimethylallyl diphosphate = N(6)-dimethylallyladenosine(37) in tRNA + diphosphate. Catalyzes the transfer of a dimethylallyl group onto the adenine at position 37 in tRNAs that read codons beginning with uridine, leading to the formation of N6-(dimethylallyl)adenosine (i(6)A). The protein is tRNA dimethylallyltransferase of Thioalkalivibrio sulfidiphilus (strain HL-EbGR7).